The sequence spans 221 residues: Large ribosomal subunit protein uL16x (221 aa).

It belongs to the universal ribosomal protein uL16 family. Component of the small ribosomal subunit. Mature ribosomes consist of a small (40S) and a large (60S) subunit. The 40S subunit contains about 33 different proteins and 1 molecule of RNA (18S). The 60S subunit contains about 49 different proteins and 3 molecules of RNA (25S, 5.8S and 5S).

In Arabidopsis thaliana (Mouse-ear cress), this protein is Large ribosomal subunit protein uL16x (RPL10C).